The sequence spans 1395 residues: DNA-directed RNA polymerase subunit beta' (1395 aa).

4 residues coordinate Zn(2+): cysteine 70, cysteine 72, cysteine 85, and cysteine 88. Mg(2+) is bound by residues aspartate 460, aspartate 462, and aspartate 464. Zn(2+)-binding residues include cysteine 814, cysteine 888, cysteine 895, and cysteine 898.

This sequence belongs to the RNA polymerase beta' chain family. In terms of assembly, the RNAP catalytic core consists of 2 alpha, 1 beta, 1 beta' and 1 omega subunit. When a sigma factor is associated with the core the holoenzyme is formed, which can initiate transcription. Requires Mg(2+) as cofactor. The cofactor is Zn(2+).

The catalysed reaction is RNA(n) + a ribonucleoside 5'-triphosphate = RNA(n+1) + diphosphate. DNA-dependent RNA polymerase catalyzes the transcription of DNA into RNA using the four ribonucleoside triphosphates as substrates. The protein is DNA-directed RNA polymerase subunit beta' of Pseudoalteromonas atlantica (strain T6c / ATCC BAA-1087).